Here is an 822-residue protein sequence, read N- to C-terminus: Cadherin-3 (822 aa).

The signal sequence occupies residues 1–25 (MELLSGPHAFLLLLLQVCWLRSVVS). The propeptide occupies 26-99 (EPYRAGFIGE…PTRILRRRKR (74 aa)). Cadherin domains lie at 100 to 207 (EWVM…KPKF), 208 to 320 (TQDT…APEF), 321 to 432 (EPQK…APVF), 433 to 538 (VPPS…DHGP), and 539 to 645 (IPEP…RPWK). Residues 100 to 647 (EWVMPPIFVP…NDCPRPWKGG (548 aa)) are Extracellular-facing. An N-linked (GlcNAc...) asparagine glycan is attached at asparagine 192. Asparagine 558 is a glycosylation site (N-linked (GlcNAc...) asparagine). The helical transmembrane segment at 648–670 (FILPILGAVLALLTLLLALLLLV) threads the bilayer. Topologically, residues 671–822 (RKKRKVKEPL…ADMYGGGEDD (152 aa)) are cytoplasmic.

Interacts with CDCP1 and CTNNB1.

The protein resides in the cell membrane. Cadherins are calcium-dependent cell adhesion proteins. They preferentially interact with themselves in a homophilic manner in connecting cells; cadherins may thus contribute to the sorting of heterogeneous cell types. In Mus musculus (Mouse), this protein is Cadherin-3 (Cdh3).